The following is a 56-amino-acid chain: Photosystem II assembly protein Psb34 (56 aa).

The Cytoplasmic segment spans residues 1–33 (MRYTTDEGGRLNNFAIEPKVYQAQPWTPQQKVR). A helical transmembrane segment spans residues 34–54 (AALLVGGGLLLVAGLVAIAVG). The Extracellular portion of the chain corresponds to 55-56 (VS).

In terms of assembly, part of photosystem II (PSII) assembly intermediate complex PSII-I; crystallized from a strain without psbJ, it forms monomeric PSII before addition of the oxygen evolving complex. PSII-I includes 3 assembly factors not found in mature PSII (Psb27, Psb28 and Psb34). The N-terminus of Psb34 (this protein) binds to CP47 (psbB) in close proximity to PsbH on the cytoplasmic face of PSII.

It is found in the cellular thylakoid membrane. Functionally, involved in photosystem II (PSII) assembly and/or repair, probably in conversion of late PSII assembly intermediates into mature dimeric PSII. In Thermosynechococcus vestitus (strain NIES-2133 / IAM M-273 / BP-1), this protein is Photosystem II assembly protein Psb34.